We begin with the raw amino-acid sequence, 174 residues long: Large ribosomal subunit protein uL10 (174 aa).

This sequence belongs to the universal ribosomal protein uL10 family. In terms of assembly, part of the ribosomal stalk of the 50S ribosomal subunit. The N-terminus interacts with L11 and the large rRNA to form the base of the stalk. The C-terminus forms an elongated spine to which L12 dimers bind in a sequential fashion forming a multimeric L10(L12)X complex.

Its function is as follows. Forms part of the ribosomal stalk, playing a central role in the interaction of the ribosome with GTP-bound translation factors. The sequence is that of Large ribosomal subunit protein uL10 from Verminephrobacter eiseniae (strain EF01-2).